A 284-amino-acid polypeptide reads, in one-letter code: Protein phosphatase 1 regulatory subunit 3B (284 aa).

Residues 61–64 (RVSF) carry the PP1-binding motif motif. A CBM21 domain is found at 124 to 232 (RNRLQTDHVC…SNKGKNYRII (109 aa)). Serine 260 is modified (phosphoserine).

In terms of assembly, interacts with glycogen, PPP1CC catalytic subunit of PP1 and PYGL. Associates with glycogen particles. Forms complexes with debranching enzyme, glycogen phosphorylase, glycogen synthase and phosphorylase kinase which is necessary for its regulation of PP1 activity.

Acts as a glycogen-targeting subunit for phosphatase PP1. Facilitates interaction of the PP1 with enzymes of the glycogen metabolism and regulates its activity. Suppresses the rate at which PP1 dephosphorylates (inactivates) glycogen phosphorylase and enhances the rate at which it activates glycogen synthase and therefore limits glycogen breakdown. Its activity is inhibited by PYGL, resulting in inhibition of the glycogen synthase and glycogen phosphorylase phosphatase activities of PP1. Dramatically increases basal and insulin-stimulated glycogen synthesis upon overexpression in hepatocytes. The chain is Protein phosphatase 1 regulatory subunit 3B (PPP1R3B) from Bos taurus (Bovine).